The primary structure comprises 380 residues: Succinyl-diaminopimelate desuccinylase (380 aa).

His-69 contacts Zn(2+). Residue Asp-71 is part of the active site. A Zn(2+)-binding site is contributed by Asp-102. Glu-135 acts as the Proton acceptor in catalysis. Zn(2+) is bound by residues Glu-136, Glu-164, and His-353.

This sequence belongs to the peptidase M20A family. DapE subfamily. Homodimer. It depends on Zn(2+) as a cofactor. Co(2+) serves as cofactor.

It catalyses the reaction N-succinyl-(2S,6S)-2,6-diaminopimelate + H2O = (2S,6S)-2,6-diaminopimelate + succinate. The protein operates within amino-acid biosynthesis; L-lysine biosynthesis via DAP pathway; LL-2,6-diaminopimelate from (S)-tetrahydrodipicolinate (succinylase route): step 3/3. In terms of biological role, catalyzes the hydrolysis of N-succinyl-L,L-diaminopimelic acid (SDAP), forming succinate and LL-2,6-diaminopimelate (DAP), an intermediate involved in the bacterial biosynthesis of lysine and meso-diaminopimelic acid, an essential component of bacterial cell walls. The sequence is that of Succinyl-diaminopimelate desuccinylase from Phenylobacterium zucineum (strain HLK1).